We begin with the raw amino-acid sequence, 742 residues long: Photosystem I P700 chlorophyll a apoprotein A2 2 (742 aa).

Transmembrane regions (helical) follow at residues 46–69 (IFAT…FHVA), 135–158 (LYQG…LHLQ), 175–199 (LNHH…HVAI), 273–291 (MAHH…GHMY), 334–357 (LHFQ…QHMY), 373–399 (AALY…IFWI), 421–443 (AIIS…IYVH), and 524–542 (FLVH…LICV). [4Fe-4S] cluster is bound by residues Cys-566 and Cys-575. 2 helical membrane passes run 583 to 604 (SFYL…YWHW) and 651 to 673 (LSVW…MFLI). Chlorophyll a-binding residues include His-662, Met-670, and Tyr-678. Residue Trp-679 coordinates phylloquinone. Residues 715 to 735 (LVGLAHFTVGYILTYAAFLIA) form a helical membrane-spanning segment.

The protein belongs to the PsaA/PsaB family. The PsaA/B heterodimer binds the P700 chlorophyll special pair and subsequent electron acceptors. PSI consists of a core antenna complex that captures photons, and an electron transfer chain that converts photonic excitation into a charge separation. The cyanobacterial PSI reaction center is composed of one copy each of PsaA,B,C,D,E,F,I,J,K,L,M and X, and forms trimeric complexes. The cofactor is PSI electron transfer chain: 5 chlorophyll a, 1 chlorophyll a', 2 phylloquinones and 3 4Fe-4S clusters. PSI core antenna: 90 chlorophyll a, 22 carotenoids, 3 phospholipids and 1 galactolipid. P700 is a chlorophyll a/chlorophyll a' dimer, A0 is one or more chlorophyll a, A1 is one or both phylloquinones and FX is a shared 4Fe-4S iron-sulfur center..

It is found in the cellular thylakoid membrane. It catalyses the reaction reduced [plastocyanin] + hnu + oxidized [2Fe-2S]-[ferredoxin] = oxidized [plastocyanin] + reduced [2Fe-2S]-[ferredoxin]. In terms of biological role, psaA and PsaB bind P700, the primary electron donor of photosystem I (PSI), as well as the electron acceptors A0, A1 and FX. PSI is a plastocyanin/cytochrome c6-ferredoxin oxidoreductase, converting photonic excitation into a charge separation, which transfers an electron from the donor P700 chlorophyll pair to the spectroscopically characterized acceptors A0, A1, FX, FA and FB in turn. Oxidized P700 is reduced on the lumenal side of the thylakoid membrane by plastocyanin or cytochrome c6. The sequence is that of Photosystem I P700 chlorophyll a apoprotein A2 2 (psaB2) from Nostoc sp. (strain PCC 7120 / SAG 25.82 / UTEX 2576).